A 246-amino-acid polypeptide reads, in one-letter code: Acetoacetate decarboxylase (246 aa).

Residue K116 is the Schiff-base intermediate with acetoacetate of the active site.

It belongs to the ADC family.

The enzyme catalyses acetoacetate + H(+) = acetone + CO2. Catalyzes the conversion of acetoacetate to acetone and carbon dioxide. This is Acetoacetate decarboxylase from Clostridium botulinum (strain Eklund 17B / Type B).